We begin with the raw amino-acid sequence, 157 residues long: SsrA-binding protein (157 aa).

It belongs to the SmpB family.

The protein resides in the cytoplasm. Its function is as follows. Required for rescue of stalled ribosomes mediated by trans-translation. Binds to transfer-messenger RNA (tmRNA), required for stable association of tmRNA with ribosomes. tmRNA and SmpB together mimic tRNA shape, replacing the anticodon stem-loop with SmpB. tmRNA is encoded by the ssrA gene; the 2 termini fold to resemble tRNA(Ala) and it encodes a 'tag peptide', a short internal open reading frame. During trans-translation Ala-aminoacylated tmRNA acts like a tRNA, entering the A-site of stalled ribosomes, displacing the stalled mRNA. The ribosome then switches to translate the ORF on the tmRNA; the nascent peptide is terminated with the 'tag peptide' encoded by the tmRNA and targeted for degradation. The ribosome is freed to recommence translation, which seems to be the essential function of trans-translation. The protein is SsrA-binding protein of Elusimicrobium minutum (strain Pei191).